Consider the following 160-residue polypeptide: Transcription elongation factor GreA (160 aa).

The stretch at 2–81 (AEKKNILTYE…KNAEVVVEDE (80 aa)) forms a coiled coil. The segment at 36-55 (KEAREQGDLSENAEYDAAKD) is disordered.

Belongs to the GreA/GreB family.

Its function is as follows. Necessary for efficient RNA polymerase transcription elongation past template-encoded arresting sites. The arresting sites in DNA have the property of trapping a certain fraction of elongating RNA polymerases that pass through, resulting in locked ternary complexes. Cleavage of the nascent transcript by cleavage factors such as GreA or GreB allows the resumption of elongation from the new 3'terminus. GreA releases sequences of 2 to 3 nucleotides. The sequence is that of Transcription elongation factor GreA from Lachnoclostridium phytofermentans (strain ATCC 700394 / DSM 18823 / ISDg) (Clostridium phytofermentans).